A 215-amino-acid chain; its full sequence is MPKGAWSTAASGTREASTPSRSSWPASPTTSPPPWSEPDAEISRRKRSSSSWPKSPIKTTQETCRRFCARPPSTTPKLILSNSLSGSSSPGPSSSRRGARFRRSTAASSRSPATSARSTSSCPRAAPTCPCPLSRRVPSPPYLRGPARVTAFRCIIQGHPRGPPPAARYRSRAAGMRPLASHRRRHQPAPGNQVSPGPSPRPDPAMRGKPAGAPA.

Disordered regions lie at residues Met-1–Arg-144 and Ile-156–Ala-215. Low complexity-rich tracts occupy residues Ala-16 to Thr-29, Ser-49 to Lys-58, Ser-85 to Arg-96, and Ser-104 to Pro-127.

This is an uncharacterized protein from Homo sapiens (Human).